Reading from the N-terminus, the 242-residue chain is Large ribosomal subunit protein uL30y (242 aa).

It belongs to the universal ribosomal protein uL30 family.

This is Large ribosomal subunit protein uL30y (RPL7B) from Arabidopsis thaliana (Mouse-ear cress).